We begin with the raw amino-acid sequence, 132 residues long: MRSLSLILLALATMLTPISAQFGFFDQMFGGGGGGEQEQHHGHGHGGHQRQQQNAPSDGAGYRAQYARLHCDNYLCPDTLACVHFPHHCPCPWPAHEEKVELAEGQRICVSHGGFKAGEAARKVELARKGLL.

A signal peptide spans 1–20 (MRSLSLILLALATMLTPISA). The interval 33-59 (GGGEQEQHHGHGHGGHQRQQQNAPSDG) is disordered.

This sequence belongs to the LCL2 family.

Probable component of the endoplasmic reticulum-associated degradation (ERAD) pathway. The protein is Long chronological lifespan protein 2 (LCL2) of Podospora anserina (strain S / ATCC MYA-4624 / DSM 980 / FGSC 10383) (Pleurage anserina).